A 231-amino-acid polypeptide reads, in one-letter code: MNDPKVIVALDYDNLADALAFVDKIDPSTCRLKVGKEMFTLFGPDFVRELHKRGFSVFLDLKFHDIPNTCSKAVKAAAELGVWMVNVHASGGERMMAASREILEPYGKERPLLIGVTVLTSMESADLQGIGILSAPQDHVLRLATLTKNAGLDGVVCSAQEASLLKQHLGREFKLVTPGIRPAGSEQGDQRRIMTPAQAIASGSDYLVIGRPITQAAHPEVVLEEINSSLV.

Residues Asp11, Lys33, 60 to 69 (DLKFHDIPNT), Thr120, Arg181, Gln190, Gly210, and Arg211 each bind substrate. Lys62 functions as the Proton donor in the catalytic mechanism.

It belongs to the OMP decarboxylase family. Type 1 subfamily. As to quaternary structure, homodimer.

It catalyses the reaction orotidine 5'-phosphate + H(+) = UMP + CO2. It participates in pyrimidine metabolism; UMP biosynthesis via de novo pathway; UMP from orotate: step 2/2. Catalyzes the decarboxylation of orotidine 5'-monophosphate (OMP) to uridine 5'-monophosphate (UMP). The sequence is that of Orotidine 5'-phosphate decarboxylase from Vibrio cholerae serotype O1 (strain ATCC 39315 / El Tor Inaba N16961).